A 156-amino-acid chain; its full sequence is Endoribonuclease YbeY (156 aa).

The Zn(2+) site is built by H114, H118, and H124.

This sequence belongs to the endoribonuclease YbeY family. Zn(2+) is required as a cofactor.

It localises to the cytoplasm. Functionally, single strand-specific metallo-endoribonuclease involved in late-stage 70S ribosome quality control and in maturation of the 3' terminus of the 16S rRNA. This Sodalis glossinidius (strain morsitans) protein is Endoribonuclease YbeY.